The primary structure comprises 134 residues: L-ectoine synthase (134 aa).

This sequence belongs to the ectoine synthase family.

It catalyses the reaction (2S)-4-acetamido-2-aminobutanoate = L-ectoine + H2O. It participates in amine and polyamine biosynthesis; ectoine biosynthesis; L-ectoine from L-aspartate 4-semialdehyde: step 3/3. Its function is as follows. Catalyzes the circularization of gamma-N-acetyl-alpha,gamma-diaminobutyric acid (ADABA) to ectoine (1,4,5,6-tetrahydro-2-methyl-4-pyrimidine carboxylic acid), which is an excellent osmoprotectant. The sequence is that of L-ectoine synthase from Thermobifida fusca (strain YX).